Reading from the N-terminus, the 152-residue chain is Ubiquitin-conjugating enzyme E2 W (152 aa).

A Peptide (Met-Gly) (interchain with G-Cter in ubiquitin) cross-link involves residue Met1. Residues 4-152 (AATRRLMKEL…TRWWFHDDSV (149 aa)) enclose the UBC core domain. The active-site Glycyl thioester intermediate is Cys92.

It belongs to the ubiquitin-conjugating enzyme family.

The enzyme catalyses S-ubiquitinyl-[E1 ubiquitin-activating enzyme]-L-cysteine + [E2 ubiquitin-conjugating enzyme]-L-cysteine = [E1 ubiquitin-activating enzyme]-L-cysteine + S-ubiquitinyl-[E2 ubiquitin-conjugating enzyme]-L-cysteine.. It catalyses the reaction S-ubiquitinyl-[E1 ubiquitin-activating enzyme]-L-cysteine + [acceptor protein]-N-terminal-amino acid = [E1 ubiquitin-activating enzyme]-L-cysteine + N-terminal-ubiquitinyl-[acceptor protein].. It participates in protein modification; protein ubiquitination. In terms of biological role, accepts ubiquitin from the E1 complex and catalyzes its covalent attachment to other proteins. Together with ubc-18, required for the ubiquitination of membranous organelles, and the removal of paternal mitochondria from early embryos. The sequence is that of Ubiquitin-conjugating enzyme E2 W from Caenorhabditis elegans.